A 58-amino-acid polypeptide reads, in one-letter code: Enterocin-HF (58 aa).

Positions 1–15 are excised as a propeptide; sequence MEKLTVKEMSQVVGG. A disulfide bridge connects residues cysteine 24 and cysteine 29.

It is found in the secreted. Bacteriocin. The polypeptide is Enterocin-HF (entHF) (Enterococcus faecium (Streptococcus faecium)).